The primary structure comprises 94 residues: Large ribosomal subunit protein bL25 (94 aa).

It belongs to the bacterial ribosomal protein bL25 family. In terms of assembly, part of the 50S ribosomal subunit; part of the 5S rRNA/L5/L18/L25 subcomplex. Contacts the 5S rRNA. Binds to the 5S rRNA independently of L5 and L18.

Functionally, this is one of the proteins that binds to the 5S RNA in the ribosome where it forms part of the central protuberance. The sequence is that of Large ribosomal subunit protein bL25 from Klebsiella pneumoniae (strain 342).